Reading from the N-terminus, the 214-residue chain is uncharacterized protein (214 aa).

4 helical membrane-spanning segments follow: residues 10-30 (IPPL…SLGI), 55-75 (IGVG…GYAI), 147-167 (VSGA…AGMA), and 174-194 (RFSW…AILL).

The protein belongs to the DedA family.

It is found in the cell membrane. This is an uncharacterized protein from Mycobacterium leprae (strain TN).